We begin with the raw amino-acid sequence, 137 residues long: Basic phospholipase A2 beta-bungarotoxin A-AL4 chain (137 aa).

The N-terminal stretch at 1–10 (LAVCVSLLGA) is a signal peptide. Residues 11–18 (ANIPPQHL) constitute a propeptide that is removed on maturation. Disulfide bonds link cysteine 45-cysteine 137, cysteine 47-cysteine 63, cysteine 62-cysteine 118, cysteine 69-cysteine 111, cysteine 79-cysteine 104, and cysteine 97-cysteine 109. Residues tyrosine 46, glycine 48, and glycine 50 each coordinate Ca(2+). The active site involves histidine 66. Aspartate 67 provides a ligand contact to Ca(2+). The active site involves aspartate 112.

The protein belongs to the phospholipase A2 family. Group I subfamily. D49 sub-subfamily. As to quaternary structure, heterodimer; disulfide-linked. The A chains have phospholipase A2 activity and the B chains show homology with the basic protease inhibitors. Ca(2+) serves as cofactor. Expressed by the venom gland.

The protein resides in the secreted. It catalyses the reaction a 1,2-diacyl-sn-glycero-3-phosphocholine + H2O = a 1-acyl-sn-glycero-3-phosphocholine + a fatty acid + H(+). Functionally, snake venom phospholipase A2 (PLA2) that inhibits neuromuscular transmission by blocking acetylcholine release from the nerve termini. PLA2 catalyzes the calcium-dependent hydrolysis of the 2-acyl groups in 3-sn-phosphoglycerides. This Bungarus multicinctus (Many-banded krait) protein is Basic phospholipase A2 beta-bungarotoxin A-AL4 chain.